We begin with the raw amino-acid sequence, 111 residues long: MKLWLWVAVGVWMLMAELGTIETAPRRDGTRPSVSGARPQQVVNRLFFDYPDSDRASLLAVARFIGEKPITFVKTDSSPGLFQNILVGTLVVAFFFLLFQFCLHVNFQKGA.

Positions 1-23 (MKLWLWVAVGVWMLMAELGTIET) are cleaved as a signal peptide. The helical transmembrane segment at 85 to 105 (ILVGTLVVAFFFLLFQFCLHV) threads the bilayer.

As to expression, testis-specific.

Its subcellular location is the cell membrane. The protein localises to the secreted. Functionally, plays a role in sperm-oocyte fusion process during fertilization. In Mus musculus (Mouse), this protein is Fertilization-influencing membrane protein.